We begin with the raw amino-acid sequence, 338 residues long: 1-aminocyclopropane-1-carboxylate deaminase (338 aa).

An N6-(pyridoxal phosphate)lysine modification is found at K51. The active-site Nucleophile is S78.

The protein belongs to the ACC deaminase/D-cysteine desulfhydrase family. As to quaternary structure, homotrimer. It depends on pyridoxal 5'-phosphate as a cofactor.

It catalyses the reaction 1-aminocyclopropane-1-carboxylate + H2O = 2-oxobutanoate + NH4(+). Functionally, catalyzes a cyclopropane ring-opening reaction, the irreversible conversion of 1-aminocyclopropane-1-carboxylate (ACC) to ammonia and alpha-ketobutyrate. Allows growth on ACC as a nitrogen source. This is 1-aminocyclopropane-1-carboxylate deaminase from Acidovorax ebreus (strain TPSY) (Diaphorobacter sp. (strain TPSY)).